A 338-amino-acid chain; its full sequence is Glycerol-3-phosphate dehydrogenase [NAD(P)+] (338 aa).

NADPH contacts are provided by Ser13, Trp14, and Lys108. Sn-glycerol 3-phosphate contacts are provided by Lys108, Gly139, and Ser141. Ala143 contacts NADPH. Lys194, Asp247, Ser257, Arg258, and Asn259 together coordinate sn-glycerol 3-phosphate. The active-site Proton acceptor is the Lys194. Arg258 provides a ligand contact to NADPH. Val282 and Glu284 together coordinate NADPH.

Belongs to the NAD-dependent glycerol-3-phosphate dehydrogenase family.

The protein localises to the cytoplasm. The enzyme catalyses sn-glycerol 3-phosphate + NAD(+) = dihydroxyacetone phosphate + NADH + H(+). The catalysed reaction is sn-glycerol 3-phosphate + NADP(+) = dihydroxyacetone phosphate + NADPH + H(+). The protein operates within membrane lipid metabolism; glycerophospholipid metabolism. In terms of biological role, catalyzes the reduction of the glycolytic intermediate dihydroxyacetone phosphate (DHAP) to sn-glycerol 3-phosphate (G3P), the key precursor for phospholipid synthesis. This chain is Glycerol-3-phosphate dehydrogenase [NAD(P)+], found in Streptococcus gordonii (strain Challis / ATCC 35105 / BCRC 15272 / CH1 / DL1 / V288).